Here is a 192-residue protein sequence, read N- to C-terminus: uncharacterized protein (192 aa).

The Nudix hydrolase domain maps to 29–160; the sequence is HRQAAVLIPI…PLDIYRRGDS (132 aa). Residues 67–89 carry the Nudix box motif; the sequence is GAVDDTDASVIAAALREAEEEVA. Mg(2+)-binding residues include Glu83 and Glu87.

The protein belongs to the Nudix hydrolase family. PCD1 subfamily. Mn(2+) is required as a cofactor. Requires Mg(2+) as cofactor.

Its function is as follows. Probably mediates the hydrolysis of some nucleoside diphosphate derivatives. This is an uncharacterized protein from Shigella boydii serotype 4 (strain Sb227).